A 338-amino-acid polypeptide reads, in one-letter code: Ferrochelatase (338 aa).

Residues His202 and Glu283 each coordinate Fe cation.

Belongs to the ferrochelatase family.

Its subcellular location is the cytoplasm. The catalysed reaction is heme b + 2 H(+) = protoporphyrin IX + Fe(2+). It participates in porphyrin-containing compound metabolism; protoheme biosynthesis; protoheme from protoporphyrin-IX: step 1/1. In terms of biological role, catalyzes the ferrous insertion into protoporphyrin IX. The protein is Ferrochelatase of Acinetobacter baumannii (strain ATCC 17978 / DSM 105126 / CIP 53.77 / LMG 1025 / NCDC KC755 / 5377).